The primary structure comprises 194 residues: NADH-quinone oxidoreductase subunit B (194 aa).

Residues C72, C73, C137, and C167 each coordinate [4Fe-4S] cluster.

The protein belongs to the complex I 20 kDa subunit family. In terms of assembly, NDH-1 is composed of 14 different subunits. Subunits NuoB, C, D, E, F, and G constitute the peripheral sector of the complex. It depends on [4Fe-4S] cluster as a cofactor.

It is found in the cell inner membrane. It catalyses the reaction a quinone + NADH + 5 H(+)(in) = a quinol + NAD(+) + 4 H(+)(out). Functionally, NDH-1 shuttles electrons from NADH, via FMN and iron-sulfur (Fe-S) centers, to quinones in the respiratory chain. Couples the redox reaction to proton translocation (for every two electrons transferred, four hydrogen ions are translocated across the cytoplasmic membrane), and thus conserves the redox energy in a proton gradient. The chain is NADH-quinone oxidoreductase subunit B from Granulibacter bethesdensis (strain ATCC BAA-1260 / CGDNIH1).